A 142-amino-acid polypeptide reads, in one-letter code: Ribosome-binding factor A (142 aa).

The interval Glu119–Thr142 is disordered. The span at Glu123–Thr142 shows a compositional bias: polar residues.

The protein belongs to the RbfA family. As to quaternary structure, monomer. Binds 30S ribosomal subunits, but not 50S ribosomal subunits or 70S ribosomes.

The protein localises to the cytoplasm. In terms of biological role, one of several proteins that assist in the late maturation steps of the functional core of the 30S ribosomal subunit. Associates with free 30S ribosomal subunits (but not with 30S subunits that are part of 70S ribosomes or polysomes). Required for efficient processing of 16S rRNA. May interact with the 5'-terminal helix region of 16S rRNA. The protein is Ribosome-binding factor A of Prochlorococcus marinus (strain MIT 9303).